The sequence spans 411 residues: 2,3-bisphosphoglycerate-independent phosphoglycerate mutase (411 aa).

It belongs to the BPG-independent phosphoglycerate mutase family. A-PGAM subfamily.

The catalysed reaction is (2R)-2-phosphoglycerate = (2R)-3-phosphoglycerate. Its pathway is carbohydrate degradation; glycolysis; pyruvate from D-glyceraldehyde 3-phosphate: step 3/5. In terms of biological role, catalyzes the interconversion of 2-phosphoglycerate and 3-phosphoglycerate. In Pyrobaculum islandicum (strain DSM 4184 / JCM 9189 / GEO3), this protein is 2,3-bisphosphoglycerate-independent phosphoglycerate mutase.